The primary structure comprises 526 residues: Probable feruloyl esterase B-2 (526 aa).

A signal peptide spans 1 to 19 (MPSLRRLLPFLAAGSAALA). Cystine bridges form between Cys-28–Cys-75 and Cys-63–Cys-114. N-linked (GlcNAc...) asparagine glycans are attached at residues Asn-53, Asn-85, Asn-98, and Asn-138. Disulfide bonds link Cys-187–Cys-441, Cys-256–Cys-273, and Cys-282–Cys-291. Ser-188 acts as the Acyl-ester intermediate in catalysis. Asn-246 carries an N-linked (GlcNAc...) asparagine glycan. Residues Asp-257, Asp-260, Ala-262, Asp-264, and Ile-266 each contribute to the Ca(2+) site. 2 N-linked (GlcNAc...) asparagine glycosylation sites follow: Asn-287 and Asn-311. Active-site charge relay system residues include Asp-400 and His-440. Asn-490 and Asn-516 each carry an N-linked (GlcNAc...) asparagine glycan. Cys-503 and Cys-525 are joined by a disulfide.

The protein belongs to the tannase family.

It is found in the secreted. The enzyme catalyses feruloyl-polysaccharide + H2O = ferulate + polysaccharide.. In terms of biological role, involved in degradation of plant cell walls. Hydrolyzes the feruloyl-arabinose ester bond in arabinoxylans as well as the feruloyl-galactose and feruloyl-arabinose ester bonds in pectin. The sequence is that of Probable feruloyl esterase B-2 (faeB-2) from Aspergillus oryzae (strain ATCC 42149 / RIB 40) (Yellow koji mold).